We begin with the raw amino-acid sequence, 337 residues long: Meiotic driver wtf4 (337 aa).

Residues 1-29 (MKNKDYPLRSSMDELSTKNDNEIDLEKGP) are compositionally biased toward basic and acidic residues. The disordered stretch occupies residues 1 to 40 (MKNKDYPLRSSMDELSTKNDNEIDLEKGPLPEYNSEDEST). 6 consecutive transmembrane segments (helical) span residues 89-109 (LLISVLAVIVVFFTAWVCVNP), 119-139 (AFFVTIGITCPILLITIFCFF), 149-169 (CIKVTVIFLAQCVKVTAVGLY), 176-196 (VVIIWLLWVVICYTLFLRSKF), 210-230 (CSISAALLLFLLYVRLPFWTL), and 234-254 (FSGLFQVLGVQSCVVIVTKGL).

The protein belongs to the WTF family. Homomer. Forms protein aggregates. The two isoforms can interact with each other and with themselves. High sequence similarity is required for their interaction.

The protein resides in the spore membrane. Its subcellular location is the vacuole membrane. The protein localises to the ascus epiplasm. It localises to the cytoplasm. It is found in the endoplasmic reticulum membrane. Its function is as follows. Promotes unequal transmission of alleles from the parental zygote to progeny spores by acting as poison/antidote system where the poison and antidote proteins are produced from the same locus; the poison component is trans-acting and targets all spores within an ascus whereas the antidote component is spore-specific, leading to poisoning of all progeny that do not inherit the allele. Localizes isoform 2 to the vacuole thereby facilitating its degradation. In terms of biological role, forms toxic aggregates that disrupt spore maturation. This Schizosaccharomyces kambucha (Fission yeast) protein is Meiotic driver wtf4.